Consider the following 955-residue polypeptide: Valine--tRNA ligase (955 aa).

A 'HIGH' region motif is present at residues Pro-41–His-51. The 'KMSKS' region motif lies at Lys-554–Ser-558. Lys-557 is a binding site for ATP. Positions Gln-926–Lys-946 form a coiled coil.

Belongs to the class-I aminoacyl-tRNA synthetase family. ValS type 1 subfamily. As to quaternary structure, monomer.

The protein resides in the cytoplasm. The catalysed reaction is tRNA(Val) + L-valine + ATP = L-valyl-tRNA(Val) + AMP + diphosphate. Functionally, catalyzes the attachment of valine to tRNA(Val). As ValRS can inadvertently accommodate and process structurally similar amino acids such as threonine, to avoid such errors, it has a 'posttransfer' editing activity that hydrolyzes mischarged Thr-tRNA(Val) in a tRNA-dependent manner. This is Valine--tRNA ligase from Buchnera aphidicola subsp. Acyrthosiphon pisum (strain APS) (Acyrthosiphon pisum symbiotic bacterium).